The chain runs to 183 residues: V-type ATP synthase subunit E (183 aa).

This sequence belongs to the V-ATPase E subunit family.

Functionally, produces ATP from ADP in the presence of a proton gradient across the membrane. This is V-type ATP synthase subunit E from Fusobacterium nucleatum subsp. nucleatum (strain ATCC 25586 / DSM 15643 / BCRC 10681 / CIP 101130 / JCM 8532 / KCTC 2640 / LMG 13131 / VPI 4355).